The primary structure comprises 565 residues: Proline--tRNA ligase (565 aa).

It belongs to the class-II aminoacyl-tRNA synthetase family. ProS type 1 subfamily. In terms of assembly, homodimer.

The protein resides in the cytoplasm. It catalyses the reaction tRNA(Pro) + L-proline + ATP = L-prolyl-tRNA(Pro) + AMP + diphosphate. Functionally, catalyzes the attachment of proline to tRNA(Pro) in a two-step reaction: proline is first activated by ATP to form Pro-AMP and then transferred to the acceptor end of tRNA(Pro). As ProRS can inadvertently accommodate and process non-cognate amino acids such as alanine and cysteine, to avoid such errors it has two additional distinct editing activities against alanine. One activity is designated as 'pretransfer' editing and involves the tRNA(Pro)-independent hydrolysis of activated Ala-AMP. The other activity is designated 'posttransfer' editing and involves deacylation of mischarged Ala-tRNA(Pro). The misacylated Cys-tRNA(Pro) is not edited by ProRS. The sequence is that of Proline--tRNA ligase from Lactobacillus delbrueckii subsp. bulgaricus (strain ATCC 11842 / DSM 20081 / BCRC 10696 / JCM 1002 / NBRC 13953 / NCIMB 11778 / NCTC 12712 / WDCM 00102 / Lb 14).